A 176-amino-acid chain; its full sequence is ATP synthase subunit b (176 aa).

The helical transmembrane segment at 7 to 27 (IQIPDGSAIFVLLTFILLMFI) threads the bilayer. The segment at 75–94 (SQSQATALMENARKSSEEQS) is disordered. The span at 85 to 94 (NARKSSEEQS) shows a compositional bias: basic and acidic residues.

Belongs to the ATPase B chain family. As to quaternary structure, F-type ATPases have 2 components, F(1) - the catalytic core - and F(0) - the membrane proton channel. F(1) has five subunits: alpha(3), beta(3), gamma(1), delta(1), epsilon(1). F(0) has three main subunits: a(1), b(2) and c(10-14). The alpha and beta chains form an alternating ring which encloses part of the gamma chain. F(1) is attached to F(0) by a central stalk formed by the gamma and epsilon chains, while a peripheral stalk is formed by the delta and b chains.

It localises to the cell membrane. In terms of biological role, f(1)F(0) ATP synthase produces ATP from ADP in the presence of a proton or sodium gradient. F-type ATPases consist of two structural domains, F(1) containing the extramembraneous catalytic core and F(0) containing the membrane proton channel, linked together by a central stalk and a peripheral stalk. During catalysis, ATP synthesis in the catalytic domain of F(1) is coupled via a rotary mechanism of the central stalk subunits to proton translocation. Its function is as follows. Component of the F(0) channel, it forms part of the peripheral stalk, linking F(1) to F(0). In Oenococcus oeni (strain ATCC BAA-331 / PSU-1), this protein is ATP synthase subunit b.